The chain runs to 673 residues: Paralemmin-3 (673 aa).

Coiled-coil stretches lie at residues 4 to 49 (SSLY…LRER) and 75 to 101 (GQAQARIRNLEDSLFTLQSQLQLLQSA). Disordered stretches follow at residues 49–78 (RWLMDGAAAVPEPSEDPTSKDPQSPEGQAQ) and 99–213 (QSAS…GEAK). A compositionally biased stretch (polar residues) spans 123 to 137 (LSQSIVEAGSVGQTD). Phosphoserine is present on residues Ser-124 and Ser-143. A Phosphothreonine modification is found at Thr-151. 3 positions are modified to phosphoserine: Ser-155, Ser-157, and Ser-260. Disordered stretches follow at residues 295–343 (VPEV…SFIW) and 356–673 (LLVE…CAVM). Thr-301 is modified (phosphothreonine). At Ser-325 the chain carries Phosphoserine. Positions 327 to 338 (EGDGQGGSGGEE) are enriched in gly residues. Residues Ser-375 and Ser-420 each carry the phosphoserine modification. 2 stretches are compositionally biased toward basic and acidic residues: residues 392-477 (EAEK…KRGA) and 487-532 (GVEK…EKTQ). 2 positions are modified to phosphoserine: Ser-544 and Ser-660. 2 S-palmitoyl cysteine lipidation sites follow: Cys-667 and Cys-669. Residue Cys-670 is modified to Cysteine methyl ester. Residue Cys-670 is the site of S-farnesyl cysteine attachment. Positions 671–673 (AVM) are cleaved as a propeptide — removed in mature form.

It belongs to the paralemmin family. In terms of assembly, interacts with SIGIRR. Palmitoylated on Cys-667 and Cys-669 and prenylated on Cys-670; which is required for membrane association.

Its subcellular location is the cytoplasm. The protein localises to the cell membrane. In terms of biological role, ATP-binding protein, which may act as a adapter in the Toll-like receptor (TLR) signaling. This Homo sapiens (Human) protein is Paralemmin-3 (PALM3).